The sequence spans 205 residues: Arginine exporter protein ArgO (205 aa).

Transmembrane regions (helical) follow at residues 1–21, 42–62, 67–87, 111–131, 147–167, and 182–202; these read MLAV…PLGP, LCAL…SALL, LLLA…GWGA, IIVT…DTFV, WFAF…ALLA, and VINL…ARQG.

Belongs to the LysE/ArgO transporter (TC 2.A.75) family.

It localises to the cell inner membrane. The enzyme catalyses L-arginine(in) = L-arginine(out). Functionally, involved in the export of arginine. Important to control the intracellular level of arginine and the correct balance between arginine and lysine. The chain is Arginine exporter protein ArgO from Yersinia enterocolitica serotype O:8 / biotype 1B (strain NCTC 13174 / 8081).